The chain runs to 135 residues: Small ribosomal subunit protein uS8 (135 aa).

The protein belongs to the universal ribosomal protein uS8 family. In terms of assembly, part of the 30S ribosomal subunit. Contacts proteins S5 and S12.

In terms of biological role, one of the primary rRNA binding proteins, it binds directly to 16S rRNA central domain where it helps coordinate assembly of the platform of the 30S subunit. This Salinispora arenicola (strain CNS-205) protein is Small ribosomal subunit protein uS8.